Consider the following 535-residue polypeptide: Light-independent protochlorophyllide reductase subunit B (535 aa).

Residue aspartate 36 coordinates [4Fe-4S] cluster. Aspartate 292 serves as the catalytic Proton donor. 428–429 provides a ligand contact to substrate; it reads GL. A disordered region spans residues 447–483; the sequence is SDDAAKAEPDQPVSNAHGHTESKTVSQGEPIASDEGG.

It belongs to the ChlB/BchB/BchZ family. Protochlorophyllide reductase is composed of three subunits; BchL, BchN and BchB. Forms a heterotetramer of two BchB and two BchN subunits. [4Fe-4S] cluster serves as cofactor.

It catalyses the reaction chlorophyllide a + oxidized 2[4Fe-4S]-[ferredoxin] + 2 ADP + 2 phosphate = protochlorophyllide a + reduced 2[4Fe-4S]-[ferredoxin] + 2 ATP + 2 H2O. Its pathway is porphyrin-containing compound metabolism; bacteriochlorophyll biosynthesis (light-independent). Component of the dark-operative protochlorophyllide reductase (DPOR) that uses Mg-ATP and reduced ferredoxin to reduce ring D of protochlorophyllide (Pchlide) to form chlorophyllide a (Chlide). This reaction is light-independent. The NB-protein (BchN-BchB) is the catalytic component of the complex. The polypeptide is Light-independent protochlorophyllide reductase subunit B (Chlorobium phaeobacteroides (strain DSM 266 / SMG 266 / 2430)).